Reading from the N-terminus, the 215-residue chain is CUE domain-containing protein 4, mitochondrial (215 aa).

A mitochondrion-targeting transit peptide spans 1 to 29; that stretch reads MQPEQLAGCAVVLTVTVLTLRWMFRVDKG. Residues 48–90 form the CUE domain; that stretch reads VNSEHVHLVKTVFPHLESSAIAYDLQKTKNVDATIENALRGQP. A disordered region spans residues 109–191; it reads GAGASSHSEE…KEREELFRKR (83 aa). 2 stretches are compositionally biased toward low complexity: residues 122–140 and 153–165; these read SHEV…SLAS and SSRI…SSSS. The span at 180–191 shows a compositional bias: basic and acidic residues; it reads SKKEREELFRKR.

The protein resides in the mitochondrion. In Schizosaccharomyces pombe (strain 972 / ATCC 24843) (Fission yeast), this protein is CUE domain-containing protein 4, mitochondrial.